The sequence spans 92 residues: Small ribosomal subunit protein uS19 (92 aa).

This sequence belongs to the universal ribosomal protein uS19 family.

In terms of biological role, protein S19 forms a complex with S13 that binds strongly to the 16S ribosomal RNA. The protein is Small ribosomal subunit protein uS19 of Mesorhizobium japonicum (strain LMG 29417 / CECT 9101 / MAFF 303099) (Mesorhizobium loti (strain MAFF 303099)).